A 192-amino-acid polypeptide reads, in one-letter code: Pyridoxal 5'-phosphate synthase subunit PdxT (192 aa).

50–52 contacts L-glutamine; the sequence is GES. Cys82 functions as the Nucleophile in the catalytic mechanism. L-glutamine contacts are provided by residues Arg109 and 136–137; that span reads IR. Residues His172 and Glu174 each act as charge relay system in the active site.

This sequence belongs to the glutaminase PdxT/SNO family. As to quaternary structure, in the presence of PdxS, forms a dodecamer of heterodimers. Only shows activity in the heterodimer.

The catalysed reaction is aldehydo-D-ribose 5-phosphate + D-glyceraldehyde 3-phosphate + L-glutamine = pyridoxal 5'-phosphate + L-glutamate + phosphate + 3 H2O + H(+). The enzyme catalyses L-glutamine + H2O = L-glutamate + NH4(+). It functions in the pathway cofactor biosynthesis; pyridoxal 5'-phosphate biosynthesis. In terms of biological role, catalyzes the hydrolysis of glutamine to glutamate and ammonia as part of the biosynthesis of pyridoxal 5'-phosphate. The resulting ammonia molecule is channeled to the active site of PdxS. This chain is Pyridoxal 5'-phosphate synthase subunit PdxT, found in Haemophilus influenzae (strain PittGG).